Here is a 205-residue protein sequence, read N- to C-terminus: N-(5'-phosphoribosyl)anthranilate isomerase (205 aa).

Belongs to the TrpF family.

It catalyses the reaction N-(5-phospho-beta-D-ribosyl)anthranilate = 1-(2-carboxyphenylamino)-1-deoxy-D-ribulose 5-phosphate. It functions in the pathway amino-acid biosynthesis; L-tryptophan biosynthesis; L-tryptophan from chorismate: step 3/5. The polypeptide is N-(5'-phosphoribosyl)anthranilate isomerase (Acidiphilium cryptum (strain JF-5)).